A 691-amino-acid chain; its full sequence is Glycine--tRNA ligase beta subunit (691 aa).

The protein belongs to the class-II aminoacyl-tRNA synthetase family. In terms of assembly, tetramer of two alpha and two beta subunits.

The protein localises to the cytoplasm. The catalysed reaction is tRNA(Gly) + glycine + ATP = glycyl-tRNA(Gly) + AMP + diphosphate. The sequence is that of Glycine--tRNA ligase beta subunit from Limosilactobacillus reuteri (strain DSM 20016) (Lactobacillus reuteri).